The sequence spans 379 residues: Cobalt-precorrin-5B C(1)-methyltransferase (379 aa).

This sequence belongs to the CbiD family.

The catalysed reaction is Co-precorrin-5B + S-adenosyl-L-methionine = Co-precorrin-6A + S-adenosyl-L-homocysteine. It functions in the pathway cofactor biosynthesis; adenosylcobalamin biosynthesis; cob(II)yrinate a,c-diamide from sirohydrochlorin (anaerobic route): step 6/10. Functionally, catalyzes the methylation of C-1 in cobalt-precorrin-5B to form cobalt-precorrin-6A. The chain is Cobalt-precorrin-5B C(1)-methyltransferase from Salmonella paratyphi B (strain ATCC BAA-1250 / SPB7).